The sequence spans 297 residues: Internalin C (297 aa).

A signal peptide spans Met-1–Ala-34. LRR repeat units lie at residues Leu-74–Phe-96, Thr-97–Lys-120, Glu-122–Ser-139, Ala-140–Leu-161, Lys-162–Ser-184, and Leu-186–Lys-207.

Belongs to the internalin family. As to quaternary structure, interacts in vitro with human intestinal mucin-2 (MUC2) but not with mucin-1; binding is slightly better at pH 5.5, (the pH of the intestine) than at pH 7.4. Interacts with the SH3 6 domain of human DNMBP (Tuba). Interacts with I-kappa-B kinase alpha (IKKA, CHUK).

Its subcellular location is the secreted. It localises to the host cytoplasm. Functionally, a virulence enhancer that has at least 2 dissociable functions in infection; it impairs translocation of host transcription factor NF-kappa-B to the nucleus and antagonizes the function of the Tuba dynamin-binding protein, promoting bacterial spreading. Perturbs the morphology of host cell junctions by impairing host DNMBP (Tuba) and WASL interaction, altering cortical tension at the cell junctions and allowing bacteria to more efficiently form bacteria-filled cell protrusions which promote bacterial spreading within infected host tissue. Down-regulates the host inflammation response usually induced by Listeria infection. Interacts with host I-kappa-B kinase alpha (IKKA, CHUK), which prevents IKKA from phosphorylating NF-kappa-B inhibitor alpha (IKBA, NFKBIA) and thus delays degradation of phospho-IKBA. Translocation of host transcription factor p65 (a subunit of NF-kappa-B, RELA) into the nucleus is impaired, which prevents activation of NF-KB-regulated genes. Recognized by serum from healthy humans exposed to L.monocytogenes as well from patients who have recovered from listeriosis. This chain is Internalin C, found in Listeria monocytogenes serotype 1/2a (strain EGD / Mackaness).